Consider the following 582-residue polypeptide: uncharacterized protein (582 aa).

Transmembrane regions (helical) follow at residues 29–49 (LFIV…FAAL), 117–137 (ISAP…MGLA), 155–175 (VWAT…MIIV), 225–245 (YVYI…YFLL), 254–274 (FISI…YLLI), 287–307 (ATVI…IVLI), 329–349 (YLYL…ALSV), 376–396 (SIFG…WGLI), 432–452 (IVYL…LFNI), 458–478 (LVVS…IALS), 491–511 (IGMA…PVFF), and 523–543 (IYLY…GNWI).

Its subcellular location is the cell membrane. This is an uncharacterized protein from Mycoplasmoides gallisepticum (strain R(low / passage 15 / clone 2)) (Mycoplasma gallisepticum).